Reading from the N-terminus, the 46-residue chain is Cystatin WCPI-3 (46 aa).

Residues 35-38 (VVAG) carry the Secondary area of contact motif.

It belongs to the cystatin family. Phytocystatin subfamily.

In terms of biological role, inhibitor of papain. The polypeptide is Cystatin WCPI-3 (Wisteria floribunda (Japanese wisteria)).